A 402-amino-acid chain; its full sequence is Phosphoglycerate kinase (402 aa).

Substrate is bound by residues 21–23 (DLN), R36, 59–62 (HLGR), R114, and R147. ATP is bound by residues K202, E329, and 355 to 358 (GGDT).

Belongs to the phosphoglycerate kinase family. As to quaternary structure, monomer.

It is found in the cytoplasm. It catalyses the reaction (2R)-3-phosphoglycerate + ATP = (2R)-3-phospho-glyceroyl phosphate + ADP. It participates in carbohydrate degradation; glycolysis; pyruvate from D-glyceraldehyde 3-phosphate: step 2/5. This is Phosphoglycerate kinase from Psychrobacter sp. (strain PRwf-1).